A 540-amino-acid polypeptide reads, in one-letter code: IQ motif and ankyrin repeat domain-containing protein 1 (540 aa).

Over residues 1–17 (MSTKKGGPKAASGKGQA) the composition is skewed to low complexity. The disordered stretch occupies residues 1–62 (MSTKKGGPKA…PQAPAAPTAE (62 aa)). Residues 62 to 91 (EDKAAIVIQCAFRQYLARRELARRCQERQE) enclose the IQ domain. ANK repeat units lie at residues 191–220 (HGNT…NPNT) and 224–253 (FGRT…DPRM). The stretch at 281 to 388 (LTEAMLKNME…EETLAMARLE (108 aa)) forms a coiled coil.

The protein is IQ motif and ankyrin repeat domain-containing protein 1 of Mus musculus (Mouse).